Consider the following 124-residue polypeptide: Small ribosomal subunit protein uS12 (124 aa).

Position 89 is a 3-methylthioaspartic acid (aspartate 89).

It belongs to the universal ribosomal protein uS12 family. As to quaternary structure, part of the 30S ribosomal subunit. Contacts proteins S8 and S17. May interact with IF1 in the 30S initiation complex.

Functionally, with S4 and S5 plays an important role in translational accuracy. Interacts with and stabilizes bases of the 16S rRNA that are involved in tRNA selection in the A site and with the mRNA backbone. Located at the interface of the 30S and 50S subunits, it traverses the body of the 30S subunit contacting proteins on the other side and probably holding the rRNA structure together. The combined cluster of proteins S8, S12 and S17 appears to hold together the shoulder and platform of the 30S subunit. This is Small ribosomal subunit protein uS12 from Baumannia cicadellinicola subsp. Homalodisca coagulata.